The chain runs to 377 residues: Nitric oxide reductase FlRd-NAD(+) reductase (377 aa).

It belongs to the FAD-dependent oxidoreductase family. Requires FAD as cofactor.

The protein resides in the cytoplasm. It catalyses the reaction 2 reduced [nitric oxide reductase rubredoxin domain] + NAD(+) + H(+) = 2 oxidized [nitric oxide reductase rubredoxin domain] + NADH. The protein operates within nitrogen metabolism; nitric oxide reduction. Functionally, one of at least two accessory proteins for anaerobic nitric oxide (NO) reductase. Reduces the rubredoxin moiety of NO reductase. The protein is Nitric oxide reductase FlRd-NAD(+) reductase of Escherichia coli O139:H28 (strain E24377A / ETEC).